We begin with the raw amino-acid sequence, 185 residues long: uncharacterized protein (185 aa).

The next 2 helical transmembrane spans lie at 1–21 (MMKFLLILIFLASFSFSLTPE) and 111–131 (FLWIITGIFTTLTASVIAFAW).

This sequence to A.aeolicus aq_1900.

It is found in the cell membrane. This is an uncharacterized protein from Aquifex aeolicus (strain VF5).